Here is a 98-residue protein sequence, read N- to C-terminus: Large ribosomal subunit protein uL23 (98 aa).

It belongs to the universal ribosomal protein uL23 family. Part of the 50S ribosomal subunit. Contacts protein L29, and trigger factor when it is bound to the ribosome.

Its function is as follows. One of the early assembly proteins it binds 23S rRNA. One of the proteins that surrounds the polypeptide exit tunnel on the outside of the ribosome. Forms the main docking site for trigger factor binding to the ribosome. The chain is Large ribosomal subunit protein uL23 from Streptococcus equi subsp. equi (strain 4047).